The following is a 130-amino-acid chain: Protein YchQ (130 aa).

The Periplasmic segment spans residues 1-9; it reads MTSFSTLLS. A helical membrane pass occupies residues 10–28; sequence VHLISIALSVGLLTLRFWL. At 29 to 39 the chain is on the cytoplasmic side; that stretch reads RYQKHPQAFAR. A helical membrane pass occupies residues 40–59; it reads WTRIVPPVVDTLLLLSGIAL. Residues 60 to 73 are Periplasmic-facing; it reads MAKAHILPFSGQAQ. A helical transmembrane segment spans residues 74–93; the sequence is WLTEKLFGVIIYIVLGFIAL. Residues 94-104 lie on the Cytoplasmic side of the membrane; that stretch reads DYRRMHSQQAR. A helical transmembrane segment spans residues 105–124; the sequence is IIAFPLALVVLYIIIKLATT. The Periplasmic segment spans residues 125 to 130; the sequence is KVPLLG.

The protein belongs to the SirB2 family.

The protein resides in the cell inner membrane. This chain is Protein YchQ (ychQ), found in Escherichia coli (strain K12).